A 335-amino-acid polypeptide reads, in one-letter code: Adenosine deaminase (335 aa).

Residues His12 and His14 each contribute to the Zn(2+) site. Substrate is bound by residues His14 and Asp16. Zn(2+) is bound at residue His197. The Proton donor role is filled by Glu200. Asp278 serves as a coordination point for Zn(2+).

Belongs to the metallo-dependent hydrolases superfamily. Adenosine and AMP deaminases family. Adenosine deaminase subfamily. It depends on Zn(2+) as a cofactor.

The catalysed reaction is adenosine + H2O + H(+) = inosine + NH4(+). It carries out the reaction 2'-deoxyadenosine + H2O + H(+) = 2'-deoxyinosine + NH4(+). Functionally, catalyzes the hydrolytic deamination of adenosine and 2-deoxyadenosine. This Clostridium botulinum (strain Langeland / NCTC 10281 / Type F) protein is Adenosine deaminase.